Consider the following 207-residue polypeptide: Ion-translocating oxidoreductase complex subunit G (207 aa).

A helical membrane pass occupies residues 11–31 (GILLGFIALLCTIISAGIFFL). Residue Thr175 is modified to FMN phosphoryl threonine.

The protein belongs to the RnfG family. The complex is composed of six subunits: RnfA, RnfB, RnfC, RnfD, RnfE and RnfG. FMN is required as a cofactor.

Its subcellular location is the cell inner membrane. Functionally, part of a membrane-bound complex that couples electron transfer with translocation of ions across the membrane. The protein is Ion-translocating oxidoreductase complex subunit G of Haemophilus influenzae (strain ATCC 51907 / DSM 11121 / KW20 / Rd).